The following is a 232-amino-acid chain: MILAANFKMNHTRASTKAYIERLNAYGKQTDIDIAVFPPATALDQYETFADIGAQNAYAAEHGSFTGEIGLQQLQEFGIETVLLGHSERRHIFYESQEMIARKFAFYKERGFTIYYCLGETLQTRKKGFEAIRELLQSQLEGIDTAYENFVIAYEPVWAIGTGVAAKPEEIEEVLAYLASLTDAPLLYGGSVKPANIKEVLSIPKCDGALIGTASWDVENFIKMIEIAKEMR.

6 to 8 (NFK) serves as a coordination point for substrate. Histidine 86 acts as the Electrophile in catalysis. The active-site Proton acceptor is the glutamate 155. Substrate is bound by residues glycine 161 and serine 191.

The protein belongs to the triosephosphate isomerase family. In terms of assembly, homodimer.

It is found in the cytoplasm. It catalyses the reaction D-glyceraldehyde 3-phosphate = dihydroxyacetone phosphate. It participates in carbohydrate biosynthesis; gluconeogenesis. The protein operates within carbohydrate degradation; glycolysis; D-glyceraldehyde 3-phosphate from glycerone phosphate: step 1/1. Its function is as follows. Involved in the gluconeogenesis. Catalyzes stereospecifically the conversion of dihydroxyacetone phosphate (DHAP) to D-glyceraldehyde-3-phosphate (G3P). This is Triosephosphate isomerase from Nitratiruptor sp. (strain SB155-2).